Reading from the N-terminus, the 100-residue chain is DNA-directed RNA polymerase subunit Rpo11 (100 aa).

The protein belongs to the archaeal Rpo11/eukaryotic RPB11/RPC19 RNA polymerase subunit family. In terms of assembly, part of the RNA polymerase complex.

The protein localises to the cytoplasm. The catalysed reaction is RNA(n) + a ribonucleoside 5'-triphosphate = RNA(n+1) + diphosphate. DNA-dependent RNA polymerase (RNAP) catalyzes the transcription of DNA into RNA using the four ribonucleoside triphosphates as substrates. This Picrophilus torridus (strain ATCC 700027 / DSM 9790 / JCM 10055 / NBRC 100828 / KAW 2/3) protein is DNA-directed RNA polymerase subunit Rpo11.